The chain runs to 241 residues: Pyridoxal phosphate phosphatase PHOSPHO2 (241 aa).

Asp-8 functions as the Nucleophile in the catalytic mechanism. Positions 8 and 10 each coordinate Mg(2+). Asp-10 functions as the Proton donor in the catalytic mechanism. The substrate site is built by Asp-19 and Asp-99. Asp-179 provides a ligand contact to Mg(2+).

Belongs to the HAD-like hydrolase superfamily. PHOSPHO family. Mg(2+) serves as cofactor.

It carries out the reaction pyridoxal 5'-phosphate + H2O = pyridoxal + phosphate. Its function is as follows. Phosphatase that has high activity toward pyridoxal 5'-phosphate (PLP). Also active at much lower level toward pyrophosphate, phosphoethanolamine (PEA), phosphocholine (PCho), phospho-l-tyrosine, fructose-6-phosphate, p-nitrophenyl phosphate, and h-glycerophosphate. This Homo sapiens (Human) protein is Pyridoxal phosphate phosphatase PHOSPHO2 (PHOSPHO2).